The primary structure comprises 121 residues: MVEKTKGRKEEVVTREYTINLHKRLHGCTFKKKAPNAIKEIRKFAQKAMGTKDVRVDVKLNKQIWSRGIRSVPRRVRVRIARKRNDDEDAKEELYSLVTVAKIPAGTLKGLGPQIIEEDDE.

The protein belongs to the eukaryotic ribosomal protein eL31 family.

The polypeptide is Large ribosomal subunit protein eL31 (RPL31) (Panax ginseng (Korean ginseng)).